The following is a 439-amino-acid chain: Serine hydroxymethyltransferase (439 aa).

(6S)-5,6,7,8-tetrahydrofolate is bound by residues leucine 119 and 123 to 125 (GHL). The residue at position 228 (lysine 228) is an N6-(pyridoxal phosphate)lysine. 370–372 (SPF) contacts (6S)-5,6,7,8-tetrahydrofolate.

This sequence belongs to the SHMT family. Homodimer. Pyridoxal 5'-phosphate is required as a cofactor.

The protein resides in the cytoplasm. It catalyses the reaction (6R)-5,10-methylene-5,6,7,8-tetrahydrofolate + glycine + H2O = (6S)-5,6,7,8-tetrahydrofolate + L-serine. It functions in the pathway one-carbon metabolism; tetrahydrofolate interconversion. Its pathway is amino-acid biosynthesis; glycine biosynthesis; glycine from L-serine: step 1/1. Its function is as follows. Catalyzes the reversible interconversion of serine and glycine with tetrahydrofolate (THF) serving as the one-carbon carrier. This reaction serves as the major source of one-carbon groups required for the biosynthesis of purines, thymidylate, methionine, and other important biomolecules. Also exhibits THF-independent aldolase activity toward beta-hydroxyamino acids, producing glycine and aldehydes, via a retro-aldol mechanism. This is Serine hydroxymethyltransferase from Chlorobium phaeobacteroides (strain BS1).